A 349-amino-acid polypeptide reads, in one-letter code: tRNA pseudouridine synthase D (349 aa).

Residue Phe27 coordinates substrate. The active-site Nucleophile is Asp80. Asn129 is a substrate binding site. The region spanning 155–303 is the TRUD domain; it reads GVPNYFGAQR…VEAARRAMLL (149 aa). Position 329 (Phe329) interacts with substrate.

This sequence belongs to the pseudouridine synthase TruD family.

The enzyme catalyses uridine(13) in tRNA = pseudouridine(13) in tRNA. In terms of biological role, responsible for synthesis of pseudouridine from uracil-13 in transfer RNAs. The chain is tRNA pseudouridine synthase D from Escherichia coli O17:K52:H18 (strain UMN026 / ExPEC).